We begin with the raw amino-acid sequence, 848 residues long: Alanine--tRNA ligase (848 aa).

Positions 553, 557, 654, and 658 each coordinate Zn(2+).

This sequence belongs to the class-II aminoacyl-tRNA synthetase family. The cofactor is Zn(2+).

Its subcellular location is the cytoplasm. The enzyme catalyses tRNA(Ala) + L-alanine + ATP = L-alanyl-tRNA(Ala) + AMP + diphosphate. In terms of biological role, catalyzes the attachment of alanine to tRNA(Ala) in a two-step reaction: alanine is first activated by ATP to form Ala-AMP and then transferred to the acceptor end of tRNA(Ala). Also edits incorrectly charged Ser-tRNA(Ala) and Gly-tRNA(Ala) via its editing domain. The sequence is that of Alanine--tRNA ligase from Neorickettsia sennetsu (strain ATCC VR-367 / Miyayama) (Ehrlichia sennetsu).